Here is a 338-residue protein sequence, read N- to C-terminus: 26S proteasome non-ATPase regulatory subunit 7 (338 aa).

Residues 11–147 (VIVHPLVLLS…TEAYISVEEV (137 aa)) form the MPN domain. The disordered stretch occupies residues 286–338 (RDAEEGKSDSKEAKEKNKDSKDKDNKETKDKDGKKAEEKADKGKDEGGKGSRK).

The protein belongs to the peptidase M67A family.

Functionally, acts as a regulatory subunit of the 26S proteasome which is involved in the ATP-dependent degradation of ubiquitinated proteins. This chain is 26S proteasome non-ATPase regulatory subunit 7 (Rpn8), found in Drosophila melanogaster (Fruit fly).